A 385-amino-acid polypeptide reads, in one-letter code: 1-deoxy-D-xylulose 5-phosphate reductoisomerase (385 aa).

6 residues coordinate NADPH: T13, G14, S15, I16, N40, and N122. K123 serves as a coordination point for 1-deoxy-D-xylulose 5-phosphate. E124 serves as a coordination point for NADPH. Position 148 (D148) interacts with Mn(2+). 1-deoxy-D-xylulose 5-phosphate is bound by residues S149, E150, S177, and H200. E150 is a Mn(2+) binding site. G206 provides a ligand contact to NADPH. 4 residues coordinate 1-deoxy-D-xylulose 5-phosphate: S213, N218, K219, and E222. Residue E222 participates in Mn(2+) binding.

The protein belongs to the DXR family. Requires Mg(2+) as cofactor. It depends on Mn(2+) as a cofactor.

It carries out the reaction 2-C-methyl-D-erythritol 4-phosphate + NADP(+) = 1-deoxy-D-xylulose 5-phosphate + NADPH + H(+). It participates in isoprenoid biosynthesis; isopentenyl diphosphate biosynthesis via DXP pathway; isopentenyl diphosphate from 1-deoxy-D-xylulose 5-phosphate: step 1/6. Its function is as follows. Catalyzes the NADPH-dependent rearrangement and reduction of 1-deoxy-D-xylulose-5-phosphate (DXP) to 2-C-methyl-D-erythritol 4-phosphate (MEP). This chain is 1-deoxy-D-xylulose 5-phosphate reductoisomerase, found in Francisella tularensis subsp. tularensis (strain WY96-3418).